A 304-amino-acid chain; its full sequence is Mitochondrial glycine transporter (304 aa).

3 Solcar repeats span residues 3–82 (GKSK…VREA), 106–186 (ENLI…LKVA), and 209–293 (SSAM…LVKR). The next 6 helical transmembrane spans lie at 9–34 (IYAG…TRVQ), 57–83 (GTLP…REAV), 108–133 (LISG…VRYE), 161–184 (GWAA…EQLK), 213–239 (INSV…KTRM), and 268–286 (GLAL…SWCI).

The protein belongs to the mitochondrial carrier (TC 2.A.29) family. SLC25A38 subfamily.

Its subcellular location is the mitochondrion inner membrane. It carries out the reaction glycine(in) = glycine(out). Functionally, mitochondrial glycine transporter that imports glycine into the mitochondrial matrix. Plays an important role in providing glycine for the first enzymatic step in heme biosynthesis, the condensation of glycine with succinyl-CoA to produce 5-aminolevulinate (ALA) in the mitochondrial matrix. This Yarrowia lipolytica (strain CLIB 122 / E 150) (Yeast) protein is Mitochondrial glycine transporter.